The chain runs to 236 residues: Probable sulfate/thiosulfate import ATP-binding protein CysA (236 aa).

An ABC transporter domain is found at 3–233 (ILIENISKRF…PTNTFVTNFL (231 aa)). 35–42 (GPSGSGKS) provides a ligand contact to ATP.

The protein belongs to the ABC transporter superfamily. Sulfate/tungstate importer (TC 3.A.1.6) family.

The protein localises to the plastid. It localises to the chloroplast. The catalysed reaction is sulfate(out) + ATP + H2O = sulfate(in) + ADP + phosphate + H(+). The enzyme catalyses thiosulfate(out) + ATP + H2O = thiosulfate(in) + ADP + phosphate + H(+). Its function is as follows. Part of the ABC transporter complex involved in sulfate/thiosulfate import. Responsible for energy coupling to the transport system. The polypeptide is Probable sulfate/thiosulfate import ATP-binding protein CysA (Chlorella vulgaris (Green alga)).